The following is a 185-amino-acid chain: dCTP deaminase (185 aa).

107-112 serves as a coordination point for dCTP; sequence KSTYAR. Residue E133 is the Proton donor/acceptor of the active site. Q152, Y166, and Q176 together coordinate dCTP.

The protein belongs to the dCTP deaminase family. As to quaternary structure, homotrimer.

It carries out the reaction dCTP + H2O + H(+) = dUTP + NH4(+). The protein operates within pyrimidine metabolism; dUMP biosynthesis; dUMP from dCTP (dUTP route): step 1/2. Functionally, catalyzes the deamination of dCTP to dUTP. This Nitratiruptor sp. (strain SB155-2) protein is dCTP deaminase.